We begin with the raw amino-acid sequence, 253 residues long: Putative glutamine amidotransferase PB2B2.05 (253 aa).

The 224-residue stretch at 5–228 (IIALSVGFSN…INRSKWHMKQ (224 aa)) folds into the Glutamine amidotransferase type-1 domain. Cys100 (nucleophile) is an active-site residue. Active-site residues include His200 and Glu202.

It is found in the cytoplasm. The protein localises to the nucleus. This chain is Putative glutamine amidotransferase PB2B2.05, found in Schizosaccharomyces pombe (strain 972 / ATCC 24843) (Fission yeast).